We begin with the raw amino-acid sequence, 425 residues long: Glutamate-1-semialdehyde 2,1-aminomutase (425 aa).

Position 265 is an N6-(pyridoxal phosphate)lysine (lysine 265).

Belongs to the class-III pyridoxal-phosphate-dependent aminotransferase family. HemL subfamily. Homodimer. Pyridoxal 5'-phosphate is required as a cofactor.

Its subcellular location is the cytoplasm. It catalyses the reaction (S)-4-amino-5-oxopentanoate = 5-aminolevulinate. The protein operates within porphyrin-containing compound metabolism; protoporphyrin-IX biosynthesis; 5-aminolevulinate from L-glutamyl-tRNA(Glu): step 2/2. The protein is Glutamate-1-semialdehyde 2,1-aminomutase of Thiobacillus denitrificans (strain ATCC 25259 / T1).